Reading from the N-terminus, the 238-residue chain is Probable transcriptional regulatory protein ABC1956 (238 aa).

It belongs to the TACO1 family. YeeN subfamily.

It is found in the cytoplasm. The sequence is that of Probable transcriptional regulatory protein ABC1956 from Shouchella clausii (strain KSM-K16) (Alkalihalobacillus clausii).